A 396-amino-acid chain; its full sequence is Ribosomal RNA large subunit methyltransferase I (396 aa).

Residues 2 to 79 (AVRIKLKPGR…REEEIDREFF (78 aa)) form the PUA domain.

The protein belongs to the methyltransferase superfamily. RlmI family.

The protein localises to the cytoplasm. It catalyses the reaction cytidine(1962) in 23S rRNA + S-adenosyl-L-methionine = 5-methylcytidine(1962) in 23S rRNA + S-adenosyl-L-homocysteine + H(+). In terms of biological role, specifically methylates the cytosine at position 1962 (m5C1962) of 23S rRNA. The protein is Ribosomal RNA large subunit methyltransferase I of Shewanella sp. (strain MR-4).